Consider the following 214-residue polypeptide: Putative ankyrin repeat protein RF_1081 (214 aa).

Polar residues predominate over residues 1-14 (MRKQQIPTLSTSAL). Residues 1 to 32 (MRKQQIPTLSTSALDKSPGPGSPDSDIEMKST) are disordered. One copy of the ANK repeat lies at 67–135 (NPNALLHEAA…EEPILVTKKD (69 aa)).

This Rickettsia felis (strain ATCC VR-1525 / URRWXCal2) (Rickettsia azadi) protein is Putative ankyrin repeat protein RF_1081.